The primary structure comprises 1184 residues: Cartilage intermediate layer protein 1 (1184 aa).

A signal peptide spans 1-21; that stretch reads MVGTKAWVFSFLVLEVTSVLG. N-linked (GlcNAc...) asparagine glycans are attached at residues N129 and N132. A TSP type-1 domain is found at 149 to 201; it reads ERIWSPWSPWSKCSAACGQTGVQTRTRICLAEMVSLCSEASEEGQHCMGQDCT. Cystine bridges form between C161–C195, C165–C200, C177–C185, and C330–C376. The Ig-like C2-type domain maps to 309-395; that stretch reads PYMVMNPETK…KSKVAQLIVI (87 aa). N-linked (GlcNAc...) asparagine glycans are attached at residues N346, N420, N550, N631, N1000, and N1056. The interval 1136 to 1170 is disordered; that stretch reads TPAQSPAAGTVQGRVPSRRQQRASRGGQRQGGVVA. Positions 1158-1170 are enriched in low complexity; sequence ASRGGQRQGGVVA.

In terms of assembly, monomer. Interacts with TGFB1. Cleaved into 2 chains possibly by a furin-like protease upon or preceding secretion. Specifically expressed in cartilage. Localizes in the intermediates layer of articular cartilage but neither in the superficial nor in the deepest regions. Specifically and highly expressed in intervertebral disk tissue. Expression increases with aging in hip articular cartilage. Overexpressed in articular hyaline cartilage from patients with calcium pyrophosphate dihydrate crystal deposition disease (CPPD). Expression in intervertebral disk tissue from individuals with lumbar disk disease increases as disk degeneration progresses.

The protein localises to the secreted. Its subcellular location is the extracellular space. It localises to the extracellular matrix. In terms of biological role, probably plays a role in cartilage scaffolding. May act by antagonizing TGF-beta1 (TGFB1) and IGF1 functions. Has the ability to suppress IGF1-induced proliferation and sulfated proteoglycan synthesis, and inhibits ligand-induced IGF1R autophosphorylation. May inhibit TGFB1-mediated induction of cartilage matrix genes via its interaction with TGFB1. Overexpression may lead to impair chondrocyte growth and matrix repair and indirectly promote inorganic pyrophosphate (PPi) supersaturation in aging and osteoarthritis cartilage. This chain is Cartilage intermediate layer protein 1 (CILP), found in Homo sapiens (Human).